The sequence spans 194 residues: NAD(P)H:quinone oxidoreductase (194 aa).

This sequence belongs to the SsuE family. Homotetramer. Requires FMN as cofactor.

It catalyses the reaction a quinone + NADH + H(+) = a quinol + NAD(+). The catalysed reaction is a quinone + NADPH + H(+) = a quinol + NADP(+). The enzyme apparently serves as a quinone reductase in connection with conjugation reactions of hydroquinones involved in detoxification pathways. This chain is NAD(P)H:quinone oxidoreductase, found in Solanum tuberosum (Potato).